The sequence spans 103 residues: Small ribosomal subunit protein uS14c (103 aa).

This sequence belongs to the universal ribosomal protein uS14 family. In terms of assembly, part of the 30S ribosomal subunit.

Its subcellular location is the plastid. It localises to the chloroplast. Its function is as follows. Binds 16S rRNA, required for the assembly of 30S particles. This is Small ribosomal subunit protein uS14c from Oryza nivara (Indian wild rice).